The chain runs to 218 residues: Protein N-lysine methyltransferase METTL21A (218 aa).

Residues Trp47, 73-75, Asp94, Trp125, and Ala143 contribute to the S-adenosyl-L-methionine site; that span reads GAG.

It belongs to the methyltransferase superfamily. METTL21 family.

It is found in the cytoplasm. It catalyses the reaction L-lysyl-[protein] + 3 S-adenosyl-L-methionine = N(6),N(6),N(6)-trimethyl-L-lysyl-[protein] + 3 S-adenosyl-L-homocysteine + 3 H(+). Protein-lysine methyltransferase that selectively trimethylates residues in heat shock protein 70 (HSP70) family members. The polypeptide is Protein N-lysine methyltransferase METTL21A (mettl21a) (Danio rerio (Zebrafish)).